A 245-amino-acid chain; its full sequence is MSEELSAATSYTEDDFYCPVCQEVLKTPVRTAACQHVFCRKCFLTAMRESGIHCPLCRGSVTRRERACPERALDLENIMRRFSGSCRCCSKKIKFYRMRHHYKSCKKYQDEYGVSSVIPNFKISQDSVRSSNRSETSASDNTETYQEDTSSSGHPTFKCPLCQESNFTRQRLLDHCNSNHLFQIVPVTCPICVSLPWGDPSQITRNFVSHLNQRHQFDYGEFVNLQLDEETQYQTAVEESFQVNM.

The segment at 18-58 (CPVCQEVLKTPVRTAACQHVFCRKCFLTAMRESGIHCPLCR) adopts an RING-type zinc-finger fold. Zn(2+) is bound by residues C86, C89, H101, and C105. The C2HC RNF-type zinc-finger motif lies at 86–105 (CRCCSKKIKFYRMRHHYKSC). Positions 128-154 (VRSSNRSETSASDNTETYQEDTSSSGH) are disordered. T142 is subject to Phosphothreonine. C2H2-type zinc fingers lie at residues 157–180 (FKCP…NSNH) and 187–215 (VTCP…NQRH). Positions 225 to 243 (LQLDEETQYQTAVEESFQV) constitute a UIM domain.

In terms of assembly, interacts with NLK. Interacts with XRCC5/Ku80. Interacts with RBBP8/CtIP. Post-translationally, auto-ubiquitinated.

Its subcellular location is the chromosome. It catalyses the reaction S-ubiquitinyl-[E2 ubiquitin-conjugating enzyme]-L-cysteine + [acceptor protein]-L-lysine = [E2 ubiquitin-conjugating enzyme]-L-cysteine + N(6)-ubiquitinyl-[acceptor protein]-L-lysine.. Its pathway is protein modification; protein ubiquitination. Functionally, E3 ubiquitin-protein ligase involved in DNA damage response by promoting DNA resection and homologous recombination. Recruited to sites of double-strand breaks following DNA damage and specifically promotes double-strand break repair via homologous recombination. Two different, non-exclusive, mechanisms have been proposed. According to a report, regulates the choice of double-strand break repair by favoring homologous recombination over non-homologous end joining (NHEJ): acts by mediating ubiquitination of XRCC5/Ku80, leading to remove the Ku complex from DNA breaks, thereby promoting homologous recombination. According to another report, cooperates with UBE2Ds E2 ubiquitin ligases (UBE2D1, UBE2D2, UBE2D3 or UBE2D4) to promote homologous recombination by mediating ubiquitination of RBBP8/CtIP. Together with NLK, involved in the ubiquitination and degradation of TCF/LEF. Also exhibits auto-ubiquitination activity in combination with UBE2K. May act as a negative regulator in the Wnt/beta-catenin-mediated signaling pathway. This is E3 ubiquitin-protein ligase RNF138 from Mus musculus (Mouse).